We begin with the raw amino-acid sequence, 112 residues long: MARGGFPGGMGNMNNLMKQAQMLQKQMQSMQEEIEASEFEGSAGGGAVVAKVNGKKELIALNIKPEVVDPDDVEMLEDLVFSAVKQALEKASEETSEKMGKLTGGMGMPGLF.

Residues 91–100 (ASEETSEKMG) are compositionally biased toward basic and acidic residues. A disordered region spans residues 91–112 (ASEETSEKMGKLTGGMGMPGLF). Gly residues predominate over residues 102–112 (LTGGMGMPGLF).

It belongs to the YbaB/EbfC family. In terms of assembly, homodimer.

It localises to the cytoplasm. The protein localises to the nucleoid. Functionally, binds to DNA and alters its conformation. May be involved in regulation of gene expression, nucleoid organization and DNA protection. The protein is Nucleoid-associated protein CPR_0056 of Clostridium perfringens (strain SM101 / Type A).